Here is a 365-residue protein sequence, read N- to C-terminus: Decapping nuclease RAI1 (365 aa).

Position 165 (Glu165) interacts with a divalent metal cation. Substrate contacts are provided by Cys197 and Glu214. Asp216, Glu234, and Leu235 together coordinate a divalent metal cation. Lys236 and Gln260 together coordinate substrate.

The protein belongs to the DXO/Dom3Z family. In terms of assembly, interacts with rat1; the interaction is direct, stabilizes rat1 protein structure and stimulates its exoribonuclease activity. The interaction also stimulates rai1 pyrophosphohydrolase activity, probably by recruiting it to mRNA substrates. It depends on a divalent metal cation as a cofactor.

Its subcellular location is the nucleus. The enzyme catalyses a 5'-end NAD(+)-phospho-ribonucleoside in mRNA + H2O = a 5'-end phospho-ribonucleoside in mRNA + NAD(+) + H(+). It catalyses the reaction a 5'-end (N(7)-methyl 5'-triphosphoguanosine)-ribonucleoside-ribonucleotide in mRNA + H2O = a (N(7)-methyl 5'-triphosphoguanosine)-nucleoside + a 5'-end phospho-ribonucleoside in mRNA + H(+). It carries out the reaction a 5'-end triphospho-ribonucleoside in mRNA + H2O = a 5'-end phospho-ribonucleoside in mRNA + diphosphate + H(+). In terms of biological role, decapping enzyme for NAD-capped RNAs: specifically hydrolyzes the nicotinamide adenine dinucleotide (NAD) cap from a subset of RNAs by removing the entire NAD moiety from the 5'-end of an NAD-capped RNA. The NAD-cap is present at the 5'-end of some RNAs and snoRNAs. In contrast to the canonical 5'-end N7 methylguanosine (m7G) cap, the NAD cap promotes mRNA decay. Also acts as a non-canonical decapping enzyme that removes the entire cap structure of m7G capped or incompletely capped RNAs. Has decapping activity toward incomplete 5'-end m7G cap mRNAs such as unmethylated 5'-end-capped RNA (cap0), while it has no activity toward 2'-O-ribose methylated m7G cap (cap1). Also possesses RNA 5'-pyrophosphohydrolase activity by hydrolyzing the 5'-end triphosphate to release pyrophosphates. Stimulates exoribonuclease activity of Rat1, allowing it to degrade RNAs with stable secondary structure more effectively. The sequence is that of Decapping nuclease RAI1 (rai1) from Aspergillus fumigatus (strain ATCC MYA-4609 / CBS 101355 / FGSC A1100 / Af293) (Neosartorya fumigata).